The primary structure comprises 144 residues: Oleosin H2 (144 aa).

An N-acetylalanine modification is found at A2. 3 helical membrane passes run 28–48 (VLAV…AGLI), 53–73 (IIGL…LVPA), and 75–95 (LTIA…ITAL). The Proline-knot motif lies at 61–72 (PLFVIFSPILVP). Residues 124-144 (QETVGQKTREAGQRSQDVIRP) are disordered.

This sequence belongs to the oleosin family. In terms of tissue distribution, expressed in seeds (at protein level).

It is found in the lipid droplet. The protein localises to the membrane. Functionally, may have a structural role to stabilize the lipid body during desiccation of the seed by preventing coalescence of the oil. Probably interacts with both lipid and phospholipid moieties of lipid bodies. May also provide recognition signals for specific lipase anchorage in lipolysis during seedling growth. The chain is Oleosin H2 from Sesamum indicum (Oriental sesame).